Here is a 1402-residue protein sequence, read N- to C-terminus: DNA-directed RNA polymerase subunit beta' (1402 aa).

Zn(2+) contacts are provided by C73, C75, C88, and C91. Residues D464, D466, and D468 each coordinate Mg(2+). Zn(2+) contacts are provided by C812, C886, C893, and C896.

It belongs to the RNA polymerase beta' chain family. The RNAP catalytic core consists of 2 alpha, 1 beta, 1 beta' and 1 omega subunit. When a sigma factor is associated with the core the holoenzyme is formed, which can initiate transcription. Mg(2+) serves as cofactor. The cofactor is Zn(2+).

The catalysed reaction is RNA(n) + a ribonucleoside 5'-triphosphate = RNA(n+1) + diphosphate. Its function is as follows. DNA-dependent RNA polymerase catalyzes the transcription of DNA into RNA using the four ribonucleoside triphosphates as substrates. The polypeptide is DNA-directed RNA polymerase subunit beta' (Rhodopseudomonas palustris (strain ATCC BAA-98 / CGA009)).